The primary structure comprises 159 residues: MPELKIKTEKVEKQLTKEPLVLKTPKEKIDNLGKFYATGKRKNAIARVWLKVGKGKIVVNKKTIAQYFPSETYVKTILKPFVLTKTIDQYDIICTVRGGGISGQKGAILHGISKALDKSAPDFHAILRKGGLLTRDSRVVERKKYGQRKARKKTQFSKR.

It belongs to the universal ribosomal protein uS9 family.

The protein is Small ribosomal subunit protein uS9 of Rickettsia africae (strain ESF-5).